Consider the following 427-residue polypeptide: Serine--tRNA ligase (427 aa).

230–232 provides a ligand contact to L-serine; sequence TSE. 261–263 contributes to the ATP binding site; that stretch reads RSE. L-serine is bound at residue Glu-284. Residue 348-351 participates in ATP binding; that stretch reads EISS. Ser-384 provides a ligand contact to L-serine.

The protein belongs to the class-II aminoacyl-tRNA synthetase family. Type-1 seryl-tRNA synthetase subfamily. In terms of assembly, homodimer. The tRNA molecule binds across the dimer.

The protein localises to the cytoplasm. It carries out the reaction tRNA(Ser) + L-serine + ATP = L-seryl-tRNA(Ser) + AMP + diphosphate + H(+). The enzyme catalyses tRNA(Sec) + L-serine + ATP = L-seryl-tRNA(Sec) + AMP + diphosphate + H(+). It participates in aminoacyl-tRNA biosynthesis; selenocysteinyl-tRNA(Sec) biosynthesis; L-seryl-tRNA(Sec) from L-serine and tRNA(Sec): step 1/1. Catalyzes the attachment of serine to tRNA(Ser). Is also able to aminoacylate tRNA(Sec) with serine, to form the misacylated tRNA L-seryl-tRNA(Sec), which will be further converted into selenocysteinyl-tRNA(Sec). The protein is Serine--tRNA ligase of Desulforapulum autotrophicum (strain ATCC 43914 / DSM 3382 / VKM B-1955 / HRM2) (Desulfobacterium autotrophicum).